We begin with the raw amino-acid sequence, 473 residues long: MKKGRVSQVLGPVVDVRFEDGHLPEIYNAIKVTHKAQNENEVDIDLTLEVALHLGDDSVRTIAMASTDGVTRGMEAIDLGEPISVPVGNVTLGRVFNVLGENIDLDEPLPADAAKDPIHREAPKFDQLSTEVEILETGIKVVDLLAPYIKGGKIGLFGGAGVGKTVLIQELINNIAQEHGGISVFAGVGERTREGNDLYYEMKDSGVIGKTAMVFGQMNEPPGARMRVALTGLTMAEHFRDKEGQDVLFFIDNIFRFTQAGSEVSALLGRMPSAVGYQPTLATEMGQLQERITSTNVGSVTSIQAIYVPADDYTDPAPATTFAHLDATTNLERKLSEMGIYPAVDPLASTSRALSPEIVGEEHYEVARSVQQILQRYKELQDIIAMLGMDELSDEDKLVVSRARRVQFFLSQNFHVAEQFTGQKGSYVPVKETVKGFKEILEGKYDHLPEDAFRLVGRIEEVVEKAKEMGVEV.

Position 158 to 165 (158 to 165) interacts with ATP; sequence GGAGVGKT.

This sequence belongs to the ATPase alpha/beta chains family. F-type ATPases have 2 components, CF(1) - the catalytic core - and CF(0) - the membrane proton channel. CF(1) has five subunits: alpha(3), beta(3), gamma(1), delta(1), epsilon(1). CF(0) has three main subunits: a(1), b(2) and c(9-12). The alpha and beta chains form an alternating ring which encloses part of the gamma chain. CF(1) is attached to CF(0) by a central stalk formed by the gamma and epsilon chains, while a peripheral stalk is formed by the delta and b chains.

It localises to the cell membrane. It carries out the reaction ATP + H2O + 4 H(+)(in) = ADP + phosphate + 5 H(+)(out). In terms of biological role, produces ATP from ADP in the presence of a proton gradient across the membrane. The catalytic sites are hosted primarily by the beta subunits. The protein is ATP synthase subunit beta of Bacillus licheniformis (strain ATCC 14580 / DSM 13 / JCM 2505 / CCUG 7422 / NBRC 12200 / NCIMB 9375 / NCTC 10341 / NRRL NRS-1264 / Gibson 46).